The following is a 550-amino-acid chain: Vacuolar protein 8 (550 aa).

Residue G2 is the site of N-myristoyl glycine attachment. 2 S-palmitoyl cysteine lipidation sites follow: C4 and C7. 8 ARM repeats span residues 75–114, 116–155, 157–196, 198–237, 241–280, 282–321, 323–363, and 454–493; these read TEKD…NLAV, AENK…NLAT, DENK…NMTH, YENR…NIAV, HRKR…NLAS, ERYQ…NISI, PLNE…NLAA, and FIEC…QLLE. T548 is modified (phosphothreonine). S550 is modified (phosphoserine).

This sequence belongs to the beta-catenin family.

The protein resides in the golgi apparatus membrane. It localises to the vacuole membrane. Functionally, functions in both vacuole inheritance and protein targeting from the cytoplasm to vacuole. The polypeptide is Vacuolar protein 8 (vac8) (Schizosaccharomyces pombe (strain 972 / ATCC 24843) (Fission yeast)).